We begin with the raw amino-acid sequence, 222 residues long: MSNFEMAGTGSSRNNEEDNQQNTNWVWYKHTNNNLSTSHNNQIWQQPSLDLYPGQIDVCDMTTSSRSLTISCQECGNQAKKGCTHGRCRTCCKSNGLHCPTHVRSTWIPIAKRRERQQQLQTPTSNPTGGSGRVGKYRDINQHATLDSSGLEMGETRFPDEVSSDALFRCVRMSGTDDGEGQYAYQTTVGIAGHLFKGILYNQGPENKSMRSTQFYENPPRS.

Zn(2+) is bound by residues Cys-72, Cys-75, Cys-83, Cys-88, Cys-92, and Cys-99. Residues 72–99 (CQECGNQAKKGCTHGRCRTCCKSNGLHC) constitute a DNA-binding region (zn(2)-C6 fungal-type; degenerate). The tract at residues 114–137 (RERQQQLQTPTSNPTGGSGRVGKY) is disordered. Over residues 118–128 (QQLQTPTSNPT) the composition is skewed to polar residues. Residues 191 to 194 (IAGH) carry the Required for homo- and heterodimerization motif.

This sequence belongs to the SHI protein family. In terms of tissue distribution, expressed in cotyledon tips, leaf primordia, hydathodes, stipules, and lateral root primordia and weakly at the edges of petals and sepals.

It localises to the nucleus. Functionally, transcription activator that binds DNA on 5'-ACTCTAC-3' and promotes auxin homeostasis-regulating gene expression (e.g. YUC genes), as well as genes affecting stamen development, cell expansion and timing of flowering. Synergistically with other SHI-related proteins, regulates gynoecium, stamen and leaf development in a dose-dependent manner, controlling apical-basal patterning. Promotes style and stigma formation, and influences vascular development during gynoecium development. May also have a role in the formation and/or maintenance of the shoot apical meristem (SAM). The sequence is that of Protein SHI RELATED SEQUENCE 4 (SRS4) from Arabidopsis thaliana (Mouse-ear cress).